Here is a 1072-residue protein sequence, read N- to C-terminus: DNA-directed RNA polymerase subunit beta (1072 aa).

This sequence belongs to the RNA polymerase beta chain family. In terms of assembly, in plastids the minimal PEP RNA polymerase catalytic core is composed of four subunits: alpha, beta, beta', and beta''. When a (nuclear-encoded) sigma factor is associated with the core the holoenzyme is formed, which can initiate transcription.

It is found in the plastid. The protein resides in the chloroplast. It carries out the reaction RNA(n) + a ribonucleoside 5'-triphosphate = RNA(n+1) + diphosphate. DNA-dependent RNA polymerase catalyzes the transcription of DNA into RNA using the four ribonucleoside triphosphates as substrates. The chain is DNA-directed RNA polymerase subunit beta from Cycas taitungensis (Prince sago).